The primary structure comprises 195 residues: MATQIEKIKQLREETAAGMMDVKRALEESGGDLDGARRILKERGQAIAAKKSRRETHEGRIEAYVHFNGRVGVLVEVNCETDFVARTPEFREFCRDIALHIASMKPLCVAPEDVPEEALAEEREIAEKQAAEMGKPEHITRQIVEGRLKKWVSEQALLTQPFAKDPGKTVGELLQETVSKVGENVVIRRFVRYEL.

The tract at residues 81-84 (TDFV) is involved in Mg(2+) ion dislocation from EF-Tu.

It belongs to the EF-Ts family.

The protein resides in the cytoplasm. Its function is as follows. Associates with the EF-Tu.GDP complex and induces the exchange of GDP to GTP. It remains bound to the aminoacyl-tRNA.EF-Tu.GTP complex up to the GTP hydrolysis stage on the ribosome. The sequence is that of Elongation factor Ts from Rubrobacter xylanophilus (strain DSM 9941 / JCM 11954 / NBRC 16129 / PRD-1).